A 319-amino-acid chain; its full sequence is Putative antiporter CaxA (319 aa).

10 consecutive transmembrane segments (helical) span residues 3-23 (VATI…DRFV), 38-58 (MIIG…MVSA), 81-101 (ILLV…SMTI), 105-125 (FPLL…QSLT), 127-147 (AEGA…VYWG), 175-195 (VWLV…VHGA), 208-228 (LIGL…ASLI), 250-270 (ILAV…AAAA), 275-292 (YVMM…LRLG), and 297-317 (INRV…YLLF).

It belongs to the Ca(2+):cation antiporter (CaCA) (TC 2.A.19) family.

The protein localises to the cell membrane. Confers modest Ca(2+) and Na(+) resistance. This chain is Putative antiporter CaxA (caxA), found in Alkalimonas amylolytica.